The chain runs to 606 residues: Protein spire homolog 2 (606 aa).

In terms of domain architecture, KIND spans 21-219 (LSLEEVLKSY…RALFLETLEL (199 aa)). Positions 147–181 (KHCGSNAAKDEGYSGQDEEEEEEEEEEEEGAGRGI) are disordered. The span at 162–175 (QDEEEEEEEEEEEE) shows a compositional bias: acidic residues. WH2 domains lie at 263–277 (QLMK…LKKV) and 357–374 (LHDR…LRPV). Disordered stretches follow at residues 438–464 (DEDS…RSFS) and 517–537 (CRSL…ASHG). Positions 445 to 464 (VDMRRVESSPTPLKRDRSFS) are enriched in basic and acidic residues. The interval 554 to 574 (LALTVDGVINVRRILVKAEME) is spir-box.

The protein belongs to the spire family.

The protein localises to the cytoplasm. The protein resides in the cytoskeleton. It is found in the cytosol. It localises to the cell membrane. Its subcellular location is the cytoplasmic vesicle membrane. Acts as an actin nucleation factor, remains associated with the slow-growing pointed end of the new filament. Involved in intracellular vesicle transport along actin fibers, providing a novel link between actin cytoskeleton dynamics and intracellular transport. Required for asymmetric spindle positioning and asymmetric cell division during oocyte meiosis. Required for normal formation of the cleavage furrow and for polar body extrusion during female germ cell meiosis. Also acts in the nucleus: together with SPIRE1 and SPIRE2, promotes assembly of nuclear actin filaments in response to DNA damage in order to facilitate movement of chromatin and repair factors after DNA damage. The protein is Protein spire homolog 2 (spire2) of Danio rerio (Zebrafish).